The primary structure comprises 202 residues: MARRPPPYAWLGPGVVLGGLLPTVFLLWDALSGGLGANPVKQATHQTGQLALIVLTLSLACTPARVWLGWTWAARIRKALGLLAAFYAVLHFGIYLRGQDFSLGRIWEDVTERPFITSGFAALLLLLPLVLTSGKGSVRRLGFARWTLLHRLVYLAAALGALHYWWGVKKDHSGPLLAVLVLAALGLARLKTPARLNRPARQ.

6 helical membrane passes run 8–28 (YAWLGPGVVLGGLLPTVFLLW), 50–70 (LALIVLTLSLACTPARVWLGW), 76–96 (IRKALGLLAAFYAVLHFGIYL), 114–134 (PFITSGFAALLLLLPLVLTSG), 148–168 (LLHRLVYLAAALGALHYWWGV), and 174–194 (GPLLAVLVLAALGLARLKTPA).

The protein belongs to the MsrQ family. In terms of assembly, heterodimer of a catalytic subunit (MsrP) and a heme-binding subunit (MsrQ). Requires FMN as cofactor. The cofactor is heme b.

Its subcellular location is the cell membrane. Functionally, part of the MsrPQ system that repairs oxidized cell envelope proteins containing methionine sulfoxide residues (Met-O), using respiratory chain electrons. Thus protects these proteins from oxidative-stress damage caused by reactive species of oxygen and chlorine. MsrPQ is essential for the maintenance of envelope integrity under bleach stress, rescuing a wide series of structurally unrelated cell envelope proteins from methionine oxidation. MsrQ provides electrons for reduction to the reductase catalytic subunit MsrP, using the quinone pool of the respiratory chain. This is Protein-methionine-sulfoxide reductase heme-binding subunit MsrQ from Deinococcus radiodurans (strain ATCC 13939 / DSM 20539 / JCM 16871 / CCUG 27074 / LMG 4051 / NBRC 15346 / NCIMB 9279 / VKM B-1422 / R1).